The primary structure comprises 379 residues: MSNFLPFSRPAMGAEELAAVKEVLESGWITTGPKNLALEDAFIQLTGNQYAIAVSSATAGMHITLMALEIGPGDEVITPSMTWVSTLNMISLLGATPVMVDVDRDTLMVTPEIVEAAITPRTKAIIPVHYAGAPADTNALYAIAERHGIAVIEDAAHAVGTYYKGQHVGARGTAIFSFHAIKNITCAEGGLVVTDDESLARQLRTLKFHGLGVDAYDRQTWGRAPQAEVLTPGYKYNLTDINAAIALTQLHKLEQLNARRHDIATQYQHALVNLPFQPLALPAWPHIHSWHLFIIRVDEQRCGINRDTLMEALKEKGIGTGLHFRAAHTQKYYRQHFPDLSLPNTEWNSERICSLPLFPDMTNADAERVITALHQLAGQ.

Residue Lys182 is modified to N6-(pyridoxal phosphate)lysine.

It belongs to the DegT/DnrJ/EryC1 family. ArnB subfamily. As to quaternary structure, homodimer. Pyridoxal 5'-phosphate is required as a cofactor.

It carries out the reaction UDP-4-amino-4-deoxy-beta-L-arabinose + 2-oxoglutarate = UDP-beta-L-threo-pentopyranos-4-ulose + L-glutamate. It participates in nucleotide-sugar biosynthesis; UDP-4-deoxy-4-formamido-beta-L-arabinose biosynthesis; UDP-4-deoxy-4-formamido-beta-L-arabinose from UDP-alpha-D-glucuronate: step 2/3. Its pathway is bacterial outer membrane biogenesis; lipopolysaccharide biosynthesis. In terms of biological role, catalyzes the conversion of UDP-4-keto-arabinose (UDP-Ara4O) to UDP-4-amino-4-deoxy-L-arabinose (UDP-L-Ara4N). The modified arabinose is attached to lipid A and is required for resistance to polymyxin and cationic antimicrobial peptides. This Escherichia fergusonii (strain ATCC 35469 / DSM 13698 / CCUG 18766 / IAM 14443 / JCM 21226 / LMG 7866 / NBRC 102419 / NCTC 12128 / CDC 0568-73) protein is UDP-4-amino-4-deoxy-L-arabinose--oxoglutarate aminotransferase.